Reading from the N-terminus, the 422-residue chain is CRISPR-associated endodeoxyribonuclease Cas12f1 (422 aa).

Positions 1-126 (MIKVYRYEIV…PSYKRDIPLD (126 aa)) are recognition domain (REC). Residues 127–211 (LIKENISVNR…YLNISYDFEP (85 aa)) are wedge domain (WED). The interval 212-220 (QTRVLDLNK) is linker. The interval 221-370 (IMGIDLGVAV…IKIDPQYTSQ (150 aa)) is ruvC-I. Residues D225 and E324 contribute to the active site. The segment at 371-399 (RCSECGNIDSGNRIGQAIFKCRACGYEAN) is target nucleic acid-binding (TNB). Zn(2+) contacts are provided by C372, C375, C391, and C394. Residues 400–420 (ADYNAARNIAIPNIDKIIAES) form a ruvC-II region. D401 is an active-site residue.

It belongs to the CRISPR-associated endonuclease Cas12f family. As to quaternary structure, an asymmetric homodimer. Guide RNA is probably required for dimerization. It depends on Mg(2+) as a cofactor. Requires Zn(2+) as cofactor.

In terms of biological role, CRISPR (clustered regularly interspaced short palindromic repeat), is an adaptive immune system that provides protection against mobile genetic elements (viruses, transposable elements and conjugative plasmids). CRISPR clusters contain sequences complementary to antecedent mobile elements and target invading nucleic acids. CRISPR clusters are transcribed and processed into CRISPR RNA (crRNA), which requires a trans-encoded small RNA (tracrRNA), but not this protein. Recognizes a short motif in the CRISPR repeat sequences (the 5' PAM or protospacer adjacent motif, YTT in this organism) to help distinguish self versus nonself, as targets within the CRISPR locus do not have PAMs. Has dsDNA endonuclease activity upon expression in E.coli of this protein, a mini CRISPR array and the probable tracrRNA. Plasmid cleavage is centered around positions 19-24 base pairs 3' of PAM. The mini system protects E.coli against transformation by foreign plasmids. The polypeptide is CRISPR-associated endodeoxyribonuclease Cas12f1 (Sulfoacidibacillus thermotolerans (Acidibacillus sulfuroxidans)).